Here is an 86-residue protein sequence, read N- to C-terminus: Putative membrane protein insertion efficiency factor (86 aa).

The protein belongs to the UPF0161 family.

It is found in the cell inner membrane. Could be involved in insertion of integral membrane proteins into the membrane. This chain is Putative membrane protein insertion efficiency factor, found in Ruegeria sp. (strain TM1040) (Silicibacter sp.).